The sequence spans 227 residues: Cytidylate kinase (227 aa).

Position 12–20 (12–20 (GPSGAGKGT)) interacts with ATP.

It belongs to the cytidylate kinase family. Type 1 subfamily.

The protein resides in the cytoplasm. It carries out the reaction CMP + ATP = CDP + ADP. It catalyses the reaction dCMP + ATP = dCDP + ADP. The polypeptide is Cytidylate kinase (Xanthomonas axonopodis pv. citri (strain 306)).